A 318-amino-acid chain; its full sequence is NADH-ubiquinone oxidoreductase chain 1 (318 aa).

8 helical membrane passes run Phe2–Leu22, Met70–Pro90, Leu100–Gly120, Ile140–Phe160, Leu172–Glu192, Gly217–Ile237, Glu253–Ile273, and Leu294–Ile314.

The protein belongs to the complex I subunit 1 family. In terms of assembly, core subunit of respiratory chain NADH dehydrogenase (Complex I) which is composed of 45 different subunits.

It localises to the mitochondrion inner membrane. It catalyses the reaction a ubiquinone + NADH + 5 H(+)(in) = a ubiquinol + NAD(+) + 4 H(+)(out). Functionally, core subunit of the mitochondrial membrane respiratory chain NADH dehydrogenase (Complex I) which catalyzes electron transfer from NADH through the respiratory chain, using ubiquinone as an electron acceptor. Essential for the catalytic activity and assembly of complex I. This is NADH-ubiquinone oxidoreductase chain 1 (MT-ND1) from Emballonura alecto (Philippine sheath-tailed bat).